A 273-amino-acid polypeptide reads, in one-letter code: MTIKNVIFSLFILAILAETVFSQNCMDTSCPGLKECCSRWGFCGTKDEYCGFFCFSGPCNIKGKSYGYDYNVDAGPRGKIETVITSALFDSIMSKVESNCSAKGFYTYEAFITAFKSFGAYKGKVAKREIAAILAHFSYGSKSFCYKEEISNERYCSKSKKYPCEPGKNYYGRGLLQSITWNEYYGAGKHLGLPLLKDPDLVSRSPEVAFKFAMWFWNRNVRPALYLGFGEITKRVDGRECGNWRRDDTKNKVKQYIEFCEMLGVTPDQGLDC.

The N-terminal stretch at 1–22 (MTIKNVIFSLFILAILAETVFS) is a signal peptide. The Chitin-binding type-1 domain occupies 23 to 61 (QNCMDTSCPGLKECCSRWGFCGTKDEYCGFFCFSGPCNI). 4 disulfides stabilise this stretch: cysteine 25-cysteine 37, cysteine 30-cysteine 43, cysteine 36-cysteine 50, and cysteine 54-cysteine 59. Residues 78–273 (GKIETVITSA…GVTPDQGLDC (196 aa)) form a catalytic region. Asparagine 99 carries N-linked (GlcNAc...) asparagine glycosylation.

Belongs to the glycosyl hydrolase 19 family. Chitinase class I subfamily.

The protein is Inactive endochitinase At2g43600 of Arabidopsis thaliana (Mouse-ear cress).